The chain runs to 444 residues: Signal recognition particle 54 kDa protein (444 aa).

GTP-binding positions include 106–113 (GLQGSGKT), 187–191 (DTAGR), and 245–248 (SKLD).

Belongs to the GTP-binding SRP family. SRP54 subfamily. Part of the signal recognition particle protein translocation system, which is composed of SRP and FtsY. Archaeal SRP consists of a 7S RNA molecule of 300 nucleotides and two protein subunits: SRP54 and SRP19.

It is found in the cytoplasm. The catalysed reaction is GTP + H2O = GDP + phosphate + H(+). Its function is as follows. Involved in targeting and insertion of nascent membrane proteins into the cytoplasmic membrane. Binds to the hydrophobic signal sequence of the ribosome-nascent chain (RNC) as it emerges from the ribosomes. The SRP-RNC complex is then targeted to the cytoplasmic membrane where it interacts with the SRP receptor FtsY. The polypeptide is Signal recognition particle 54 kDa protein (Methanosphaera stadtmanae (strain ATCC 43021 / DSM 3091 / JCM 11832 / MCB-3)).